The primary structure comprises 235 residues: Small ribosomal subunit protein uS3 (235 aa).

Positions 39 to 107 constitute a KH type-2 domain; that stretch reads VRLFLRKELF…PTQINIAEIR (69 aa).

Belongs to the universal ribosomal protein uS3 family. Part of the 30S ribosomal subunit. Forms a tight complex with proteins S10 and S14.

In terms of biological role, binds the lower part of the 30S subunit head. Binds mRNA in the 70S ribosome, positioning it for translation. The polypeptide is Small ribosomal subunit protein uS3 (Buchnera aphidicola subsp. Baizongia pistaciae (strain Bp)).